We begin with the raw amino-acid sequence, 244 residues long: MSSSRSGEHRRNYAQGRNYESSRSRGDQRDRDYREYRRNYRDERSSRRYEDSQRRDYSPARRRDRYERHRESVREESPRRPVEHERNWQPELKHGRERFRERDYEGRRDRKERRDGVSPFSPEGEGLERKREHEKLQAPSPKEEEERPVDQGDKMDGVKEDKDGSLEVGKSHDAMTRTKSAEEEIVEQEDEATAEMKRIMGFSGFDTTTGKKHGDVGQVYKQKKTKYRQYMNRPGGFNRPLDNE.

2 stretches are compositionally biased toward basic and acidic residues: residues 1–11 (MSSSRSGEHRR) and 20–116 (ESSR…RRDG). 2 disordered regions span residues 1 to 192 (MSSS…EDEA) and 223 to 244 (KKTK…LDNE). Ser-121 and Ser-140 each carry phosphoserine. The segment covering 126 to 182 (GLERKREHEKLQAPSPKEEEERPVDQGDKMDGVKEDKDGSLEVGKSHDAMTRTKSAE) has biased composition (basic and acidic residues). Residues 183–192 (EEIVEQEDEA) are compositionally biased toward acidic residues.

The protein belongs to the SNUT3 family. In terms of assembly, part of a tri-snRNP complex.

It is found in the nucleus. Functionally, may play a role in mRNA splicing. This Schizosaccharomyces pombe (strain 972 / ATCC 24843) (Fission yeast) protein is U4/U6.U5 tri-snRNP-associated protein 3-like protein C162.01c.